Here is a 138-residue protein sequence, read N- to C-terminus: Small ribosomal subunit protein uS11c (138 aa).

A disordered region spans residues 1–23; it reads MAKPIQRIGSRRNGPIGSRKNGR.

Belongs to the universal ribosomal protein uS11 family. As to quaternary structure, part of the 30S ribosomal subunit.

The protein resides in the plastid. It localises to the chloroplast. The polypeptide is Small ribosomal subunit protein uS11c (Platanus occidentalis (Sycamore)).